Here is a 191-residue protein sequence, read N- to C-terminus: uncharacterized protein (191 aa).

6 consecutive transmembrane segments (helical) span residues 4–24, 26–46, 68–88, 90–110, 135–155, and 168–188; these read IYRQTIHLVFGVLIAFSVLIF, KQLIIPLIVSIVIGICLYFLC, GKGAIYFAIGMLISLILIDDI, AVFFGILVFAVGDSLATIIGI, LILYPFYGTYGIFVALISAFI, and LYLPFIVAFIINHQINICSLM.

Its subcellular location is the cell membrane. This is an uncharacterized protein from Methanocaldococcus jannaschii (strain ATCC 43067 / DSM 2661 / JAL-1 / JCM 10045 / NBRC 100440) (Methanococcus jannaschii).